We begin with the raw amino-acid sequence, 467 residues long: Probable protein phosphatase 2C 6 (467 aa).

The tract at residues 61–81 is disordered; sequence VEDDAVAPGRGEEGGEASAVG. The 309-residue stretch at 149–457 folds into the PPM-type phosphatase domain; that stretch reads LWGHKSICGR…DNISVIVVDL (309 aa). Mn(2+) contacts are provided by Asp-205, Gly-206, Asp-386, and Asp-448.

The protein belongs to the PP2C family. Interacts with PYL9. Mg(2+) serves as cofactor. It depends on Mn(2+) as a cofactor.

Its subcellular location is the nucleus. The protein resides in the cytoplasm. The protein localises to the cytosol. It catalyses the reaction O-phospho-L-seryl-[protein] + H2O = L-seryl-[protein] + phosphate. The catalysed reaction is O-phospho-L-threonyl-[protein] + H2O = L-threonyl-[protein] + phosphate. Probable protein phosphatase that may function in abscisic acid (ABA) signaling. The protein is Probable protein phosphatase 2C 6 of Oryza sativa subsp. japonica (Rice).